Here is a 509-residue protein sequence, read N- to C-terminus: Histidine--tRNA ligase, cytoplasmic (509 aa).

An N-acetylalanine modification is found at Ala2. The WHEP-TRS domain occupies 3-59 (DRAALEELVRLQGAHVRGLKEQKASAEQIEEEVTKLLKLKAQLGQDEGKQKFVLKTP). At Ser66 the chain carries Phosphoserine. L-histidine is bound by residues 130–132 (DLT), Arg157, Gln173, Asp177, Arg326, and 330–331 (YY). Ser356 carries the post-translational modification Phosphoserine.

It belongs to the class-II aminoacyl-tRNA synthetase family. Homodimer.

The protein localises to the cytoplasm. It catalyses the reaction tRNA(His) + L-histidine + ATP = L-histidyl-tRNA(His) + AMP + diphosphate + H(+). Catalyzes the ATP-dependent ligation of histidine to the 3'-end of its cognate tRNA, via the formation of an aminoacyl-adenylate intermediate (His-AMP). Plays a role in axon guidance. This chain is Histidine--tRNA ligase, cytoplasmic (Hars1), found in Mus musculus (Mouse).